Here is a 938-residue protein sequence, read N- to C-terminus: Isoleucine--tRNA ligase (938 aa).

A 'HIGH' region motif is present at residues 58–68; the sequence is PYANGSIHIGH. Residue lysine 183 is modified to N6-acetyllysine. Glutamate 561 provides a ligand contact to L-isoleucyl-5'-AMP. Residues 602–606 carry the 'KMSKS' region motif; the sequence is KMSKS. Lysine 605 provides a ligand contact to ATP. Zn(2+) is bound by residues cysteine 901, cysteine 904, cysteine 921, and cysteine 924.

The protein belongs to the class-I aminoacyl-tRNA synthetase family. IleS type 1 subfamily. Monomer. Zn(2+) is required as a cofactor.

The protein resides in the cytoplasm. The enzyme catalyses tRNA(Ile) + L-isoleucine + ATP = L-isoleucyl-tRNA(Ile) + AMP + diphosphate. Functionally, catalyzes the attachment of isoleucine to tRNA(Ile). As IleRS can inadvertently accommodate and process structurally similar amino acids such as valine, to avoid such errors it has two additional distinct tRNA(Ile)-dependent editing activities. One activity is designated as 'pretransfer' editing and involves the hydrolysis of activated Val-AMP. The other activity is designated 'posttransfer' editing and involves deacylation of mischarged Val-tRNA(Ile). In Escherichia coli (strain ATCC 8739 / DSM 1576 / NBRC 3972 / NCIMB 8545 / WDCM 00012 / Crooks), this protein is Isoleucine--tRNA ligase.